We begin with the raw amino-acid sequence, 723 residues long: Heme/hemopexin utilization protein C (723 aa).

An N-terminal signal peptide occupies residues 1–21 (MRFSKLSLAITTTLVTANALA). The TBDR plug domain occupies 36 to 147 (DPSRFAYTPE…LGGVVAMRTP (112 aa)). The region spanning 158 to 723 (KFGVKIRQGY…NAKISAVYSF (566 aa)) is the TBDR beta-barrel domain. The TonB C-terminal box motif lies at 706–723 (SLMEGTGRNAKISAVYSF).

Belongs to the TonB-dependent receptor family.

The protein localises to the cell outer membrane. Its function is as follows. Required for utilization of free heme at low concentrations. In Haemophilus influenzae (strain ATCC 51907 / DSM 11121 / KW20 / Rd), this protein is Heme/hemopexin utilization protein C (hxuC).